Consider the following 177-residue polypeptide: Large ribosomal subunit protein uL6 (177 aa).

It belongs to the universal ribosomal protein uL6 family. As to quaternary structure, part of the 50S ribosomal subunit.

In terms of biological role, this protein binds to the 23S rRNA, and is important in its secondary structure. It is located near the subunit interface in the base of the L7/L12 stalk, and near the tRNA binding site of the peptidyltransferase center. The chain is Large ribosomal subunit protein uL6 from Bartonella quintana (strain Toulouse) (Rochalimaea quintana).